A 61-amino-acid polypeptide reads, in one-letter code: Large ribosomal subunit protein eL20 (61 aa).

Belongs to the eukaryotic ribosomal protein eL20 family. As to quaternary structure, part of the 50S ribosomal subunit. Binds 23S rRNA.

The chain is Large ribosomal subunit protein eL20 from Methanosarcina mazei (strain ATCC BAA-159 / DSM 3647 / Goe1 / Go1 / JCM 11833 / OCM 88) (Methanosarcina frisia).